The chain runs to 395 residues: Nucleoside diphosphate kinase homolog 7 (395 aa).

One can recognise a DM10 domain in the interval 22–110; sequence QSERFAFIAE…YTARQLGSRK (89 aa).

This sequence belongs to the NDK family. Component of sperm flagellar doublet microtubules. Component of the gamma-tubulin ring complex.

The protein resides in the cytoplasm. The protein localises to the cytoskeleton. It is found in the microtubule organizing center. Its subcellular location is the centrosome. It localises to the nucleus. The protein resides in the spindle. The protein localises to the cilium axoneme. It is found in the flagellum axoneme. Its subcellular location is the cell projection. It localises to the cilium. Possesses an intrinsic kinase activity. Displays 3'-5' exonuclease activity with a preference for single-stranded DNA. Does not seem to have nucleoside diphosphate kinase activity. Functional component of the gamma-tubulin ring complex, implicated in the regulation of the microtubule-nucleating activity of the gamma-tubulin ring complex in centrosomes, in a kinase activity-dependent manner. Part of the dynein-decorated doublet microtubules (DMTs) in cilia axoneme, which is required for motile cilia beating. The sequence is that of Nucleoside diphosphate kinase homolog 7 from Mus musculus (Mouse).